Reading from the N-terminus, the 299-residue chain is Probable lipid kinase YegS (299 aa).

Positions 2–133 constitute a DAGKc domain; it reads ANFPASLLIL…IDMARVNDKT (132 aa). ATP-binding positions include threonine 40, 66–72, and threonine 95; that span reads GDGTINE. The Mg(2+) site is built by leucine 215, aspartate 218, and leucine 220. Glutamate 271 (proton acceptor) is an active-site residue.

This sequence belongs to the diacylglycerol/lipid kinase family. YegS lipid kinase subfamily. Requires Mg(2+) as cofactor. The cofactor is Ca(2+).

Its subcellular location is the cytoplasm. Functionally, probably phosphorylates lipids; the in vivo substrate is unknown. The protein is Probable lipid kinase YegS of Salmonella newport (strain SL254).